Here is a 468-residue protein sequence, read N- to C-terminus: Serine--tRNA ligase (468 aa).

L-serine is bound at residue 272–274; it reads TAE. 303–305 is a binding site for ATP; it reads RAE. L-serine is bound at residue glutamate 326. 390-393 contributes to the ATP binding site; the sequence is EISS. Serine 426 is a binding site for L-serine.

It belongs to the class-II aminoacyl-tRNA synthetase family. Type-1 seryl-tRNA synthetase subfamily. As to quaternary structure, homodimer. The tRNA molecule binds across the dimer.

The protein resides in the cytoplasm. It carries out the reaction tRNA(Ser) + L-serine + ATP = L-seryl-tRNA(Ser) + AMP + diphosphate + H(+). The catalysed reaction is tRNA(Sec) + L-serine + ATP = L-seryl-tRNA(Sec) + AMP + diphosphate + H(+). Its pathway is aminoacyl-tRNA biosynthesis; selenocysteinyl-tRNA(Sec) biosynthesis; L-seryl-tRNA(Sec) from L-serine and tRNA(Sec): step 1/1. Functionally, catalyzes the attachment of serine to tRNA(Ser). Is also able to aminoacylate tRNA(Sec) with serine, to form the misacylated tRNA L-seryl-tRNA(Sec), which will be further converted into selenocysteinyl-tRNA(Sec). This is Serine--tRNA ligase from Xanthobacter autotrophicus (strain ATCC BAA-1158 / Py2).